The following is a 971-amino-acid chain: Outer capsid protein VP2 (971 aa).

The protein belongs to the orbivirus VP2 family.

The protein resides in the virion. The VP2 protein is one of the two proteins (with VP5) which constitute the virus particle outer capsid. It is the major target of the host immunogenic response. The chain is Outer capsid protein VP2 (Segment-2) from Epizootic hemorrhagic disease virus 1 (EHDV-1).